A 115-amino-acid chain; its full sequence is Toxin-like structure LSTX-D2 (115 aa).

An N-terminal signal peptide occupies residues methionine 1–alanine 22. A propeptide spanning residues isoleucine 23–arginine 44 is cleaved from the precursor. Cystine bridges form between cysteine 48–cysteine 63, cysteine 55–cysteine 72, cysteine 62–cysteine 87, and cysteine 74–cysteine 85.

Belongs to the neurotoxin 19 (CSTX) family. 01 subfamily. Expressed by the venom gland.

The protein localises to the secreted. This is Toxin-like structure LSTX-D2 from Lycosa singoriensis (Wolf spider).